A 478-amino-acid polypeptide reads, in one-letter code: DNA gyrase subunit B (478 aa).

The region spanning 319 to 438 (CELYLVEGDS…QGYLYVALPP (120 aa)) is the Toprim domain. Residues Glu-325, Asp-403, and Asp-405 each contribute to the Mg(2+) site.

The protein belongs to the type II topoisomerase GyrB family. As to quaternary structure, heterotetramer, composed of two GyrA and two GyrB chains. In the heterotetramer, GyrA contains the active site tyrosine that forms a transient covalent intermediate with DNA, while GyrB binds cofactors and catalyzes ATP hydrolysis. It depends on Mg(2+) as a cofactor. Mn(2+) is required as a cofactor. Requires Ca(2+) as cofactor.

The protein resides in the cytoplasm. It carries out the reaction ATP-dependent breakage, passage and rejoining of double-stranded DNA.. In terms of biological role, a type II topoisomerase that negatively supercoils closed circular double-stranded (ds) DNA in an ATP-dependent manner to modulate DNA topology and maintain chromosomes in an underwound state. Negative supercoiling favors strand separation, and DNA replication, transcription, recombination and repair, all of which involve strand separation. Also able to catalyze the interconversion of other topological isomers of dsDNA rings, including catenanes and knotted rings. Type II topoisomerases break and join 2 DNA strands simultaneously in an ATP-dependent manner. The chain is DNA gyrase subunit B (gyrB) from Eisenibacter elegans (Flexibacter elegans).